The sequence spans 1405 residues: DNA-directed RNA polymerase subunit beta' (1405 aa).

The Zn(2+) site is built by Cys-70, Cys-72, Cys-85, and Cys-88. Mg(2+)-binding residues include Asp-460, Asp-462, and Asp-464. The Zn(2+) site is built by Cys-814, Cys-888, Cys-895, and Cys-898.

The protein belongs to the RNA polymerase beta' chain family. The RNAP catalytic core consists of 2 alpha, 1 beta, 1 beta' and 1 omega subunit. When a sigma factor is associated with the core the holoenzyme is formed, which can initiate transcription. The cofactor is Mg(2+). Zn(2+) is required as a cofactor.

It carries out the reaction RNA(n) + a ribonucleoside 5'-triphosphate = RNA(n+1) + diphosphate. In terms of biological role, DNA-dependent RNA polymerase catalyzes the transcription of DNA into RNA using the four ribonucleoside triphosphates as substrates. The polypeptide is DNA-directed RNA polymerase subunit beta' (Shewanella sp. (strain ANA-3)).